The primary structure comprises 370 residues: 3-isopropylmalate dehydrogenase (370 aa).

77–90 provides a ligand contact to NAD(+); the sequence is GAKWDGVPYEARPE. Residues R97, R107, R135, and D226 each contribute to the substrate site. Mg(2+)-binding residues include D226, D250, and D254. 290–302 is an NAD(+) binding site; that stretch reads GSAPDIAGKGLAN.

The protein belongs to the isocitrate and isopropylmalate dehydrogenases family. LeuB type 1 subfamily. Homodimer. The cofactor is Mg(2+). Mn(2+) is required as a cofactor.

It localises to the cytoplasm. The enzyme catalyses (2R,3S)-3-isopropylmalate + NAD(+) = 4-methyl-2-oxopentanoate + CO2 + NADH. Its pathway is amino-acid biosynthesis; L-leucine biosynthesis; L-leucine from 3-methyl-2-oxobutanoate: step 3/4. In terms of biological role, catalyzes the oxidation of 3-carboxy-2-hydroxy-4-methylpentanoate (3-isopropylmalate) to 3-carboxy-4-methyl-2-oxopentanoate. The product decarboxylates to 4-methyl-2 oxopentanoate. The chain is 3-isopropylmalate dehydrogenase from Rhodopseudomonas palustris (strain BisB18).